The following is a 308-amino-acid chain: Methionyl-tRNA formyltransferase (308 aa).

A (6S)-5,6,7,8-tetrahydrofolate-binding site is contributed by Ser109–Pro112.

Belongs to the Fmt family.

The enzyme catalyses L-methionyl-tRNA(fMet) + (6R)-10-formyltetrahydrofolate = N-formyl-L-methionyl-tRNA(fMet) + (6S)-5,6,7,8-tetrahydrofolate + H(+). Its function is as follows. Attaches a formyl group to the free amino group of methionyl-tRNA(fMet). The formyl group appears to play a dual role in the initiator identity of N-formylmethionyl-tRNA by promoting its recognition by IF2 and preventing the misappropriation of this tRNA by the elongation apparatus. The polypeptide is Methionyl-tRNA formyltransferase (Methylobacillus flagellatus (strain ATCC 51484 / DSM 6875 / VKM B-1610 / KT)).